A 671-amino-acid chain; its full sequence is UvrABC system protein B (671 aa).

A Helicase ATP-binding domain is found at lysine 31–asparagine 189. An ATP-binding site is contributed by glycine 44–threonine 51. A Beta-hairpin motif is present at residues tyrosine 97 to isoleucine 120. In terms of domain architecture, Helicase C-terminal spans glutamine 437–isoleucine 599. Residues lysine 634–aspartate 669 form the UVR domain.

This sequence belongs to the UvrB family. In terms of assembly, forms a heterotetramer with UvrA during the search for lesions. Interacts with UvrC in an incision complex.

It is found in the cytoplasm. Its function is as follows. The UvrABC repair system catalyzes the recognition and processing of DNA lesions. A damage recognition complex composed of 2 UvrA and 2 UvrB subunits scans DNA for abnormalities. Upon binding of the UvrA(2)B(2) complex to a putative damaged site, the DNA wraps around one UvrB monomer. DNA wrap is dependent on ATP binding by UvrB and probably causes local melting of the DNA helix, facilitating insertion of UvrB beta-hairpin between the DNA strands. Then UvrB probes one DNA strand for the presence of a lesion. If a lesion is found the UvrA subunits dissociate and the UvrB-DNA preincision complex is formed. This complex is subsequently bound by UvrC and the second UvrB is released. If no lesion is found, the DNA wraps around the other UvrB subunit that will check the other stand for damage. This chain is UvrABC system protein B, found in Lacticaseibacillus casei (strain BL23) (Lactobacillus casei).